A 223-amino-acid chain; its full sequence is AN1-type zinc finger protein 6 (223 aa).

The A20-type zinc-finger motif lies at 8–42; it reads SQAPMLCSTGCGFYGNPRTNGMCSVCYKEHLQRQN. Zn(2+)-binding residues include Cys-14, Cys-18, Cys-30, and Cys-33. Positions 41-155 are disordered; that stretch reads QNSSNGRISP…PSEEQSKSLE (115 aa). Ser-49 is modified (phosphoserine). Polar residues-rich tracts occupy residues 77–110 and 137–148; these read ALDSTSSSMQPGPVSNQSLLSESVAPSQVDSTSV and SSVSDTTQQPSE. The segment at 158–204 adopts an AN1-type zinc-finger fold; the sequence is KQKKNRCFMCRKKVGLTGFECRCGNVYCGVHRYSDVHNCSYNYKADA. Residues Cys-164, Cys-167, Cys-178, Cys-180, Cys-185, His-188, His-194, and Cys-196 each contribute to the Zn(2+) site. N6-acetyllysine is present on Lys-219.

In terms of assembly, interacts with PKN1. Interacts with TRAF2. Interacts with mono- and polyubiquitin. Interacts with PEX6. Interacts with PEX5 (Cys-linked ubiquitinated).

The protein resides in the cytoplasm. In terms of biological role, involved in regulation of TNF-alpha induced NF-kappa-B activation and apoptosis. Involved in modulation of 'Lys-48'-linked polyubiquitination status of TRAF2 and decreases association of TRAF2 with RIPK1. Required for PTS1 target sequence-dependent protein import into peroxisomes and PEX5 stability; may cooperate with PEX6. In vitro involved in PEX5 export from the cytosol to peroxisomes. The sequence is that of AN1-type zinc finger protein 6 (Zfand6) from Mus musculus (Mouse).